A 168-amino-acid chain; its full sequence is GTP-dependent dephospho-CoA kinase (168 aa).

GTP-binding residues include aspartate 49, valine 50, valine 51, aspartate 68, lysine 70, and glutamate 120.

It belongs to the GTP-dependent DPCK family.

The catalysed reaction is 3'-dephospho-CoA + GTP = GDP + CoA + H(+). The protein operates within cofactor biosynthesis; coenzyme A biosynthesis. In terms of biological role, catalyzes the GTP-dependent phosphorylation of the 3'-hydroxyl group of dephosphocoenzyme A to form coenzyme A (CoA). This chain is GTP-dependent dephospho-CoA kinase, found in Pyrobaculum calidifontis (strain DSM 21063 / JCM 11548 / VA1).